The primary structure comprises 949 residues: Lon protease homolog, mitochondrial (949 aa).

The N-terminal 65 residues, Met1 to Gly65, are a transit peptide targeting the mitochondrion. 2 disordered regions span residues Asp68 to Gly94 and Glu213 to Gly240. The region spanning Leu112–Phe359 is the Lon N-terminal domain. The segment covering Lys223–Lys232 has biased composition (basic residues). An ATP-binding site is contributed by Gly512–Thr519. The 191-residue stretch at Val748–Arg938 folds into the Lon proteolytic domain. Residues Ser844 and Lys887 contribute to the active site.

Belongs to the peptidase S16 family. Homohexamer. Organized in a ring with a central cavity. The ATP-binding and proteolytic domains (AP-domain) form a hexameric chamber, while the N-terminal domain is arranged as a trimer of dimers. DNA and RNA binding is stimulated by substrate and inhibited by ATP binding. Interacts with TWNK and mitochondrial DNA polymerase subunit POLG. In terms of tissue distribution, detected in liver &gt; heart &gt; kidney &gt; testis.

The protein localises to the mitochondrion matrix. The catalysed reaction is Hydrolysis of proteins in presence of ATP.. In terms of biological role, ATP-dependent serine protease that mediates the selective degradation of misfolded, unassembled or oxidatively damaged polypeptides as well as certain short-lived regulatory proteins in the mitochondrial matrix. Endogenous substrates include mitochondrial steroidogenic acute regulatory (StAR) protein, DELE1, helicase Twinkle (TWNK) and the large ribosomal subunit protein MRPL32/bL32m. MRPL32/bL32m is protected from degradation by LONP1 when it is bound to a nucleic acid (RNA), but TWNK is not. May also have a chaperone function in the assembly of inner membrane protein complexes. Participates in the regulation of mitochondrial gene expression and in the maintenance of the integrity of the mitochondrial genome. Binds to mitochondrial promoters and RNA in a single-stranded, site-specific, and strand-specific manner. May regulate mitochondrial DNA replication and/or gene expression using site-specific, single-stranded DNA binding to target the degradation of regulatory proteins binding to adjacent sites in mitochondrial promoters. This chain is Lon protease homolog, mitochondrial (Lonp1), found in Mus musculus (Mouse).